Here is a 128-residue protein sequence, read N- to C-terminus: NADH dehydrogenase [ubiquinone] 1 beta subcomplex subunit 6 (128 aa).

T2 bears the N-acetylthreonine mark. An N6-acetyllysine modification is found at K24. Residues S68–M86 form a helical membrane-spanning segment.

The protein belongs to the complex I NDUFB6 subunit family. In terms of assembly, complex I is composed of 45 different subunits.

The protein localises to the mitochondrion inner membrane. Accessory subunit of the mitochondrial membrane respiratory chain NADH dehydrogenase (Complex I), that is believed not to be involved in catalysis. Complex I functions in the transfer of electrons from NADH to the respiratory chain. The immediate electron acceptor for the enzyme is believed to be ubiquinone. This chain is NADH dehydrogenase [ubiquinone] 1 beta subcomplex subunit 6 (NDUFB6), found in Pongo abelii (Sumatran orangutan).